We begin with the raw amino-acid sequence, 263 residues long: Caveolae-associated protein 3 (263 aa).

The tract at residues 1–84 (MGESALEPGP…SNTLAQLLAK (84 aa)) is interaction with CAVIN1. A leucine-zipper region spans residues 20-78 (VHAVTVVTLLEKLATMLEALRERQGGLAERQGGLAGSVRRIQSGLGALSRSHDTTSNTL). Residues S62 and S70 each carry the phosphoserine modification. A Glycyl lysine isopeptide (Lys-Gly) (interchain with G-Cter in SUMO2) cross-link involves residue K128. The tract at residues 135 to 203 (ARAFQKAPEL…SSRKGSEAAQ (69 aa)) is interaction with CAV1. The disordered stretch occupies residues 141–263 (APELLGPEDQ…RPVLQIESAA (123 aa)). The segment covering 157-170 (QPEDEVGESSDEEP) has biased composition (acidic residues). Residues S165, S166, S173, and S199 each carry the phosphoserine modification. Low complexity predominate over residues 219–234 (EGPAEGQPAAQPAMEP).

It belongs to the CAVIN family. In terms of assembly, component of the CAVIN complex composed of CAVIN1, CAVIN2, CAVIN3 and CAVIN4. Interacts with PRKCD and with phosphatidylserine. Phosphatidylserine may form a bridge between PKC and PKC-binding partners and stabilize the binding. Interacts with PER2. Interacts with CAVIN1 and EPS15L1. Interacts (via leucine-zipper domain) with CAV1 in a cholesterol-sensitive manner. Post-translationally, in vitro, phosphorylated by PRKCD.

It is found in the cytoplasm. The protein resides in the membrane. It localises to the caveola. Its subcellular location is the cytosol. Functionally, regulates the traffic and/or budding of caveolae. Plays a role in caveola formation in a tissue-specific manner. Required for the formation of caveolae in smooth muscle but not in the lung and heart endothelial cells. Regulates the equilibrium between cell surface-associated and cell surface-dissociated caveolae by promoting the rapid release of caveolae from the cell surface. Plays a role in the regulation of the circadian clock. Modulates the period length and phase of circadian gene expression and also regulates expression and interaction of the core clock components PER1/2 and CRY1/2. Seems to have an immune potentiation function, especially in the glioma. This is Caveolae-associated protein 3 from Rattus norvegicus (Rat).